A 671-amino-acid polypeptide reads, in one-letter code: UvrABC system protein B (671 aa).

The Helicase ATP-binding domain occupies 26–183 (EGLENGLAHQ…RRLSELQYSR (158 aa)). Residue 39–46 (GVTGSGKT) coordinates ATP. The Beta-hairpin motif lies at 92-115 (YYDYYQPEAYVPSSDTFIEKDASV). One can recognise a Helicase C-terminal domain in the interval 431–597 (QVDDLLSEIR…GLNKKIGDIL (167 aa)). One can recognise a UVR domain in the interval 631–666 (DQKIRELEAKMYTYAQNLEFEQAAELRDQVHQLRQQ).

Belongs to the UvrB family. As to quaternary structure, forms a heterotetramer with UvrA during the search for lesions. Interacts with UvrC in an incision complex.

It is found in the cytoplasm. The UvrABC repair system catalyzes the recognition and processing of DNA lesions. A damage recognition complex composed of 2 UvrA and 2 UvrB subunits scans DNA for abnormalities. Upon binding of the UvrA(2)B(2) complex to a putative damaged site, the DNA wraps around one UvrB monomer. DNA wrap is dependent on ATP binding by UvrB and probably causes local melting of the DNA helix, facilitating insertion of UvrB beta-hairpin between the DNA strands. Then UvrB probes one DNA strand for the presence of a lesion. If a lesion is found the UvrA subunits dissociate and the UvrB-DNA preincision complex is formed. This complex is subsequently bound by UvrC and the second UvrB is released. If no lesion is found, the DNA wraps around the other UvrB subunit that will check the other stand for damage. In Yersinia pseudotuberculosis serotype IB (strain PB1/+), this protein is UvrABC system protein B.